The sequence spans 152 residues: Deoxyuridine 5'-triphosphate nucleotidohydrolase (152 aa).

Residues 71–73 (RSG), Asn84, 88–90 (LID), and Met98 each bind substrate.

It belongs to the dUTPase family. Homotrimer. Requires Mg(2+) as cofactor.

The catalysed reaction is dUTP + H2O = dUMP + diphosphate + H(+). It participates in pyrimidine metabolism; dUMP biosynthesis; dUMP from dCTP (dUTP route): step 2/2. In terms of biological role, this enzyme is involved in nucleotide metabolism: it produces dUMP, the immediate precursor of thymidine nucleotides and it decreases the intracellular concentration of dUTP so that uracil cannot be incorporated into DNA. The chain is Deoxyuridine 5'-triphosphate nucleotidohydrolase from Escherichia coli O1:K1 / APEC.